The following is a 127-amino-acid chain: MKVFKKLHNLNEILLLISIFFLVCIISLVGIGIIFDLIRKASLSAIRSDPIFFNLRAVLIVLGVFAICFMIIQLVISIMIWKTINTACENIEPKFKKILHWSCFLPFGLLQLYCYQKIKLVKQADNL.

2 helical membrane passes run 13–35 (ILLL…GIIF) and 57–81 (AVLI…IMIW).

The protein localises to the cell membrane. This is an uncharacterized protein from Mycoplasma genitalium (strain ATCC 33530 / DSM 19775 / NCTC 10195 / G37) (Mycoplasmoides genitalium).